We begin with the raw amino-acid sequence, 230 residues long: Somatolactin (230 aa).

Residues 1–23 (MKKTTVLQVCMVFVVCSLQAVIG) form the signal peptide. 3 cysteine pairs are disulfide-bonded: cysteine 28–cysteine 38, cysteine 87–cysteine 202, and cysteine 219–cysteine 227. Asparagine 226 carries N-linked (GlcNAc...) asparagine glycosylation.

It belongs to the somatotropin/prolactin family.

It localises to the secreted. In Carassius auratus (Goldfish), this protein is Somatolactin.